The primary structure comprises 330 residues: Delta-aminolevulinic acid dehydratase (330 aa).

Zn(2+) contacts are provided by C122, C124, H131, and C132. Residue K199 is the Schiff-base intermediate with substrate of the active site. K199 carries the N6-succinyllysine modification. R209 is a 5-aminolevulinate binding site. S215 carries the phosphoserine modification. R221 serves as a coordination point for 5-aminolevulinate. C223 is a Zn(2+) binding site. K252 functions as the Schiff-base intermediate with substrate in the catalytic mechanism. The residue at position 252 (K252) is an N6-succinyllysine. Residues S279 and Y318 each contribute to the 5-aminolevulinate site.

This sequence belongs to the ALAD family. Homooctamer; active form. Homohexamer; low activity form. Zn(2+) serves as cofactor.

Its subcellular location is the cytoplasm. The protein resides in the cytosol. It catalyses the reaction 2 5-aminolevulinate = porphobilinogen + 2 H2O + H(+). It participates in porphyrin-containing compound metabolism; protoporphyrin-IX biosynthesis; coproporphyrinogen-III from 5-aminolevulinate: step 1/4. Its activity is regulated as follows. Can alternate between a fully active homooctamer and a low-activity homohexamer. A bound magnesium ion may promote the assembly of the fully active homooctamer. The magnesium-binding site is absent in the low-activity homohexamer. Inhibited by compounds that favor the hexameric state. Inhibited by divalent lead ions. The lead ions partially displace the zinc cofactor. In terms of biological role, catalyzes an early step in the biosynthesis of tetrapyrroles. Binds two molecules of 5-aminolevulinate per subunit, each at a distinct site, and catalyzes their condensation to form porphobilinogen. This Mus musculus (Mouse) protein is Delta-aminolevulinic acid dehydratase (Alad).